The sequence spans 251 residues: Putative deaminase AgaI (251 aa).

The active-site Proton acceptor; for enolization step is aspartate 86. The For ring-opening step role is filled by asparagine 154. The active-site Proton acceptor; for ring-opening step is histidine 156. Glutamate 161 functions as the For ring-opening step in the catalytic mechanism.

It belongs to the glucosamine/galactosamine-6-phosphate isomerase family.

This is Putative deaminase AgaI (agaI) from Escherichia coli (strain K12).